Reading from the N-terminus, the 103-residue chain is MIGKEVTVQDIILELSEVQPEVLPVDLFCEEELPNEQETEEEPDIERISYKVIAPCGCRHCEVKLRIFVHATEFGIRAFQQLLTGDLQLLCPDCRGNCKHDGS.

An E7 terminal domain region spans residues 1-47 (MIGKEVTVQDIILELSEVQPEVLPVDLFCEEELPNEQETEEEPDIER). The LXCXE motif; interaction with host RB1 and TMEM173/STING signature appears at 27–31 (LFCEE). The segment at 56 to 94 (CGCRHCEVKLRIFVHATEFGIRAFQQLLTGDLQLLCPDC) is a zinc-finger region. Positions 76-84 (IRAFQQLLT) match the Nuclear export signal motif.

It belongs to the papillomaviridae E7 protein family. In terms of assembly, homodimer. Homooligomer. Interacts with host RB1; this interaction induces dissociation of RB1-E2F1 complex thereby disrupting RB1 activity. Interacts with host EP300; this interaction represses EP300 transcriptional activity. Interacts with protein E2; this interaction inhibits E7 oncogenic activity. Interacts with host TMEM173/STING; this interaction impairs the ability of TMEM173/STING to sense cytosolic DNA and promote the production of type I interferon (IFN-alpha and IFN-beta). In terms of processing, highly phosphorylated.

The protein localises to the host cytoplasm. It localises to the host nucleus. Plays a role in viral genome replication by driving entry of quiescent cells into the cell cycle. Stimulation of progression from G1 to S phase allows the virus to efficiently use the cellular DNA replicating machinery to achieve viral genome replication. E7 protein has both transforming and trans-activating activities. Induces the disassembly of the E2F1 transcription factor from RB1, with subsequent transcriptional activation of E2F1-regulated S-phase genes. Interferes with host histone deacetylation mediated by HDAC1 and HDAC2, leading to transcription activation. Also plays a role in the inhibition of both antiviral and antiproliferative functions of host interferon alpha. Interaction with host TMEM173/STING impairs the ability of TMEM173/STING to sense cytosolic DNA and promote the production of type I interferon (IFN-alpha and IFN-beta). The sequence is that of Protein E7 from Homo sapiens (Human).